A 227-amino-acid polypeptide reads, in one-letter code: Large ribosomal subunit protein uL1 (227 aa).

Belongs to the universal ribosomal protein uL1 family. Part of the 50S ribosomal subunit.

In terms of biological role, binds directly to 23S rRNA. The L1 stalk is quite mobile in the ribosome, and is involved in E site tRNA release. Functionally, protein L1 is also a translational repressor protein, it controls the translation of the L11 operon by binding to its mRNA. In Brevibacillus brevis (strain 47 / JCM 6285 / NBRC 100599), this protein is Large ribosomal subunit protein uL1.